A 191-amino-acid polypeptide reads, in one-letter code: Large ribosomal subunit protein bL9c (191 aa).

Residues 1–35 (MASPSCASTLPWTAAAFSYPRRLQTRRAPSLVIVA) constitute a chloroplast transit peptide.

It belongs to the bacterial ribosomal protein bL9 family. In terms of assembly, part of the 50S ribosomal subunit.

It is found in the plastid. It localises to the chloroplast. Binds to the 23S rRNA. This Triticum aestivum (Wheat) protein is Large ribosomal subunit protein bL9c (RPL9).